We begin with the raw amino-acid sequence, 588 residues long: Tetratricopeptide repeat protein 39B (588 aa).

3 TPR repeats span residues 294-327, 485-518, and 526-559; these read SIIL…QQEW, CLVQ…EKRV, and PFTF…YKDY.

Belongs to the TTC39 family.

Functionally, may be involved in lipid metabolism. In Xenopus tropicalis (Western clawed frog), this protein is Tetratricopeptide repeat protein 39B (ttc39b).